The sequence spans 1015 residues: DExH-box ATP-dependent RNA helicase DExH8 (1015 aa).

The Helicase ATP-binding domain occupies 36-197; sequence IDKILENRVT…FKELGRGERV (162 aa). Residue 49–56 coordinates ATP; the sequence is GEPGCGKS. The short motif at 144 to 147 is the DEVH box element; it reads DEVH. The Helicase C-terminal domain occupies 254 to 419; that stretch reads LIHDLILYIH…KLSLRQQVLH (166 aa). 2 C3H1-type zinc fingers span residues 727 to 753 and 754 to 782; these read YGEA…THTL and QSTR…HAMR.

This sequence belongs to the DExH box helicase family.

It catalyses the reaction ATP + H2O = ADP + phosphate + H(+). This is DExH-box ATP-dependent RNA helicase DExH8 from Arabidopsis thaliana (Mouse-ear cress).